We begin with the raw amino-acid sequence, 520 residues long: Intermediate filament protein ON3 (520 aa).

The segment covering 1-27 has biased composition (low complexity); that stretch reads MSYTKKTSYSVKSSSSGSVPRSFSSMS. A disordered region spans residues 1–33; that stretch reads MSYTKKTSYSVKSSSSGSVPRSFSSMSYSGPSV. A head region spans residues 1 to 108; it reads MSYTKKTSYS…DPNIQVVRTQ (108 aa). Residues 109–144 form a coil 1A region; it reads EKEQMKSLNNRFASFIDKVRFLEQQNKMLETKWSLL. Residues 109–420 form the IF rod domain; it reads EKEQMKSLNN…KLLEGEEDRL (312 aa). Residues 145–157 form a linker 1 region; it reads QNQTATRSNIDAM. The segment at 158-253 is coil 1B; that stretch reads FEAYINNLRR…QIFEEEIREL (96 aa). Residues 254–273 are linker 12; that stretch reads QSQIKDTSVVVEMDNSRNLD. Residues 274-420 form a coil 2 region; the sequence is MDAIVAEVRA…KLLEGEEDRL (147 aa). The tract at residues 421–520 is tail; it reads LSGIKSVNIS…VSESSEVVQD (100 aa).

This sequence belongs to the intermediate filament family.

One of the non-neuronal predominant intermediate filament proteins of the visual pathway. The chain is Intermediate filament protein ON3 from Carassius auratus (Goldfish).